Reading from the N-terminus, the 117-residue chain is Immunoglobulin kappa variable 1D-16 (117 aa).

A signal peptide spans 1 to 22 (MDMRVLAQLLGLLLLCFPGARC). Residues 23–45 (DIQMTQSPSSLSASVGDRVTITC) form a framework-1 region. The region spanning 24–117 (IQMTQSPSSL…YYCQQYNSYP (94 aa)) is the Ig-like domain. Residues Cys45 and Cys110 are joined by a disulfide bond. A complementarity-determining-1 region spans residues 46–56 (RASQGISSWLA). Residues 57-71 (WYQQKPEKAPKSLIY) form a framework-2 region. Residues 72-78 (AASSLQS) are complementarity-determining-2. The segment at 79-110 (GVPSRFSGSGSGTDFTLTISSLQPEDFATYYC) is framework-3. The complementarity-determining-3 stretch occupies residues 111–117 (QQYNSYP).

In terms of assembly, immunoglobulins are composed of two identical heavy chains and two identical light chains; disulfide-linked.

The protein resides in the secreted. It is found in the cell membrane. Its function is as follows. V region of the variable domain of immunoglobulin light chains that participates in the antigen recognition. Immunoglobulins, also known as antibodies, are membrane-bound or secreted glycoproteins produced by B lymphocytes. In the recognition phase of humoral immunity, the membrane-bound immunoglobulins serve as receptors which, upon binding of a specific antigen, trigger the clonal expansion and differentiation of B lymphocytes into immunoglobulins-secreting plasma cells. Secreted immunoglobulins mediate the effector phase of humoral immunity, which results in the elimination of bound antigens. The antigen binding site is formed by the variable domain of one heavy chain, together with that of its associated light chain. Thus, each immunoglobulin has two antigen binding sites with remarkable affinity for a particular antigen. The variable domains are assembled by a process called V-(D)-J rearrangement and can then be subjected to somatic hypermutations which, after exposure to antigen and selection, allow affinity maturation for a particular antigen. The sequence is that of Immunoglobulin kappa variable 1D-16 from Homo sapiens (Human).